The following is a 705-amino-acid chain: Solute carrier family 12 member 8 (705 aa).

A run of 11 helical transmembrane segments spans residues 38 to 58 (FGTW…VVLF), 69 to 89 (GVLL…ITVL), 92 to 112 (IGVA…ISSV), 121 to 141 (VGLL…TGFA), 159 to 179 (ISVA…KWII), 181 to 201 (LQLL…VGSF), 232 to 252 (FFTV…GFNM), 268 to 288 (LAAV…LGAV), 306 to 326 (LVGF…CMGG), 368 to 388 (LVTM…VVTI), and 390 to 410 (FMLT…AHCG). Residues 472–512 (ESRQLGSREGNNPKNQKRKGKKGAKQTLQDSFLLDPGSPLS) form a disordered region. Residues 486-495 (NQKRKGKKGA) show a composition bias toward basic residues. 2 consecutive transmembrane segments (helical) span residues 587-607 (WVSL…QWLY) and 612-632 (MGVA…LYLG).

This sequence belongs to the SLC12A transporter family.

The protein resides in the membrane. In terms of biological role, cation/chloride cotransporter that may play a role in the control of keratinocyte proliferation. This Mus musculus (Mouse) protein is Solute carrier family 12 member 8 (Slc12a8).